Here is a 490-residue protein sequence, read N- to C-terminus: Protein Mdm4 (490 aa).

The region spanning 25-108 is the SWIB/MDM2 domain; the sequence is NQVRPKLPLL…YDMLRKNLVT (84 aa). The tract at residues 129–160 is disordered; it reads DIPSQDQLKQSAEESSTSRKRTTEDDIPTLPT. The segment covering 130-143 has biased composition (polar residues); the sequence is IPSQDQLKQSAEES. The segment at 246–332 is region II; that stretch reads SEQLGVGIKV…CWALRKDWYS (87 aa). The RanBP2-type zinc-finger motif lies at 300-329; it reads SEDEWQCTECKKFNSPSKRYCFRCWALRKD. A Phosphoserine; by CHEK2 modification is found at Ser342. A Phosphoserine; by CHEK1 and CHEK2 modification is found at Ser367. The interval 393–490 is necessary for interaction with USP2; that stretch reads EFLDLAHSSE…IQLVIKVFIA (98 aa). The RING-type zinc finger occupies 437 to 478; the sequence is CSLCEKRPRDGNIIHGRTGHLVTCFHCARRLKKAGASCPICK. The short motif at 442–445 is the Nuclear localization signal element; it reads KRPR.

Belongs to the MDM2/MDM4 family. In terms of assembly, interacts with MDM2. Interacts with TP53, TP73 and USP2. Found in a trimeric complex with USP2, MDM2 and MDM4. Interacts (phosphorylated) with YWHAG; negatively regulates MDM4 activity toward TP53. Post-translationally, phosphorylated. Phosphorylation at Ser-367 promotes interaction with YWHAG and subsequent ubiquitination and degradation. Phosphorylation at Ser-342 also induces ubiquitination and degradation but to a lower extent. Ubiquitinated and degraded by MDM2. Deubiquitination by USP2 on the other hand stabilizes the MDM4 protein. In terms of tissue distribution, expressed in all tissues tested with high levels in thymus.

The protein resides in the nucleus. Functionally, along with MDM2, contributes to TP53 regulation. Inhibits p53/TP53- and TP73/p73-mediated cell cycle arrest and apoptosis by binding its transcriptional activation domain. Inhibits degradation of MDM2. Can reverse MDM2-targeted degradation of TP53 while maintaining suppression of TP53 transactivation and apoptotic functions. This Homo sapiens (Human) protein is Protein Mdm4 (MDM4).